The chain runs to 481 residues: UDP-glycosyltransferase 71K2 (481 aa).

UDP-alpha-D-glucose-binding positions include Ser-285, 350 to 351 (WA), 368 to 376 (HCGWNSILE), and 390 to 393 (YAEQ).

This sequence belongs to the UDP-glycosyltransferase family.

Glycosyltransferase that possesses chalcone and flavonol 2'-O-glycosyltransferase activity. Converts phloretin to phlorizin (phloretin 2'-O-glucoside), a potent antioxidant. Possesses glycosyltransferase activity toward quercetin, isoliquiritigenin, butein and caffeic acid. This is UDP-glycosyltransferase 71K2 from Pyrus communis (Pear).